A 348-amino-acid polypeptide reads, in one-letter code: Beta-hexosaminidase (348 aa).

Residues Asp62, Arg70, Arg134, and 164–165 (KH) each bind substrate. Catalysis depends on His177, which acts as the Proton donor/acceptor. Asp249 acts as the Nucleophile in catalysis.

The protein belongs to the glycosyl hydrolase 3 family. NagZ subfamily.

The protein localises to the cytoplasm. It carries out the reaction Hydrolysis of terminal non-reducing N-acetyl-D-hexosamine residues in N-acetyl-beta-D-hexosaminides.. Its pathway is cell wall biogenesis; peptidoglycan recycling. Functionally, plays a role in peptidoglycan recycling by cleaving the terminal beta-1,4-linked N-acetylglucosamine (GlcNAc) from peptide-linked peptidoglycan fragments, giving rise to free GlcNAc, anhydro-N-acetylmuramic acid and anhydro-N-acetylmuramic acid-linked peptides. The chain is Beta-hexosaminidase from Histophilus somni (strain 2336) (Haemophilus somnus).